Consider the following 198-residue polypeptide: Syndecan-4 (198 aa).

A signal peptide spans 1-18; that stretch reads MAPARLFALLLFFVGGVA. Over 19–145 the chain is Extracellular; sequence ESIRETEVID…QGSNIFERTE (127 aa). O-linked (Xyl...) (glycosaminoglycan) serine glycans are attached at residues Ser39, Ser61, and Ser63. The O-linked (Xyl...) (chondroitin sulfate) serine glycan is linked to Ser95. The chain crosses the membrane as a helical span at residues 146-170; that stretch reads VLAALIVGGIVGILFAVFLILLLMY. The Cytoplasmic segment spans residues 171–198; it reads RMKKKDEGSYDLGKKPIYKKAPTNEFYA.

Belongs to the syndecan proteoglycan family. As to quaternary structure, homodimer. Interacts (via its cytoplasmic domain) with GIPC (via its PDZ domain). Interacts (via its cytoplasmic domain) with NUDT16L1. Interacts with CDCP1 and SDCBP. Interacts with DNM2; this interaction is markedly enhanced at focal ahesion site upon induction of focal adhesions and stress-fiber formation. In terms of processing, shedding is enhanced by a number of factors such as heparanase, thrombin or EGF. Also by stress and wound healing. PMA-mediated shedding is inhibited by TIMP3. Post-translationally, O-glycosylated; contains both chondroitin sulfate and heparan sulfate. Ser-39, Ser-61 and Ser-63 can all be modified by either chondroitin sulfate or heparan sulfate, and the protein exists in forms that contain only chondroitin sulfate, only heparan sulfate and both chondroitin sulfate and heparan sulfate. As to expression, detected in fibroblasts (at protein level). Also expressed in epithelial cells.

It is found in the membrane. The protein localises to the secreted. Its function is as follows. Cell surface proteoglycan which regulates exosome biogenesis in concert with SDCBP and PDCD6IP. The polypeptide is Syndecan-4 (Homo sapiens (Human)).